A 494-amino-acid chain; its full sequence is Ubiquitin carboxyl-terminal hydrolase 27 (494 aa).

A helical transmembrane segment spans residues 30-50; the sequence is LSFAGLLGVAGFVFAQQHGLF. A USP domain is found at 74–494; it reads PGLQNLGNNC…EASLLFYERL (421 aa). Cys83 serves as the catalytic Nucleophile. His440 functions as the Proton acceptor in the catalytic mechanism.

This sequence belongs to the peptidase C19 family.

It is found in the membrane. It catalyses the reaction Thiol-dependent hydrolysis of ester, thioester, amide, peptide and isopeptide bonds formed by the C-terminal Gly of ubiquitin (a 76-residue protein attached to proteins as an intracellular targeting signal).. Functionally, recognizes and hydrolyzes the peptide bond at the C-terminal Gly of ubiquitin. Involved in the processing of poly-ubiquitin precursors as well as that of ubiquitinated proteins. The sequence is that of Ubiquitin carboxyl-terminal hydrolase 27 (UBP27) from Arabidopsis thaliana (Mouse-ear cress).